We begin with the raw amino-acid sequence, 273 residues long: Bis(5'-nucleosyl)-tetraphosphatase, symmetrical (273 aa).

The protein belongs to the Ap4A hydrolase family.

It carries out the reaction P(1),P(4)-bis(5'-adenosyl) tetraphosphate + H2O = 2 ADP + 2 H(+). Functionally, hydrolyzes diadenosine 5',5'''-P1,P4-tetraphosphate to yield ADP. The sequence is that of Bis(5'-nucleosyl)-tetraphosphatase, symmetrical from Aromatoleum aromaticum (strain DSM 19018 / LMG 30748 / EbN1) (Azoarcus sp. (strain EbN1)).